The following is a 567-amino-acid chain: Urease subunit alpha (567 aa).

The Urease domain maps to 128 to 567 (GGVDTHVHYI…LPLAQRYHLF (440 aa)). Ni(2+)-binding residues include His-133, His-135, and Lys-216. The residue at position 216 (Lys-216) is an N6-carboxylysine. His-218 serves as a coordination point for substrate. The Ni(2+) site is built by His-245 and His-271. Catalysis depends on His-319, which acts as the Proton donor. Asp-359 contacts Ni(2+).

Belongs to the metallo-dependent hydrolases superfamily. Urease alpha subunit family. Heterotrimer of UreA (gamma), UreB (beta) and UreC (alpha) subunits. Three heterotrimers associate to form the active enzyme. Requires Ni cation as cofactor. In terms of processing, carboxylation allows a single lysine to coordinate two nickel ions.

The protein localises to the cytoplasm. It carries out the reaction urea + 2 H2O + H(+) = hydrogencarbonate + 2 NH4(+). Its pathway is nitrogen metabolism; urea degradation; CO(2) and NH(3) from urea (urease route): step 1/1. The sequence is that of Urease subunit alpha from Pseudoalteromonas translucida (strain TAC 125).